The chain runs to 453 residues: Probable glucan endo-1,3-beta-glucosidase eglC (453 aa).

The first 18 residues, Met-1–Ala-18, serve as a signal peptide directing secretion. Glu-128 acts as the Proton donor in catalysis. N-linked (GlcNAc...) asparagine glycosylation occurs at Asn-183. Glu-239 functions as the Nucleophile in the catalytic mechanism. N-linked (GlcNAc...) asparagine glycosylation is found at Asn-364, Asn-368, and Asn-376. Residues Thr-370 to Pro-380 show a composition bias toward polar residues. The tract at residues Thr-370–Ser-423 is disordered. 2 stretches are compositionally biased toward low complexity: residues Ser-389–Ser-402 and Ser-410–Ser-423. Residue Asn-430 is the site of GPI-anchor amidated asparagine attachment. A propeptide spans Ser-431 to Leu-453 (removed in mature form).

It belongs to the glycosyl hydrolase 17 family. The GPI-anchor is attached to the protein in the endoplasmic reticulum and serves to target the protein to the cell surface. There, the glucosamine-inositol phospholipid moiety is cleaved off and the GPI-modified mannoprotein is covalently attached via its lipidless GPI glycan remnant to the 1,6-beta-glucan of the outer cell wall layer.

It is found in the cell membrane. The protein localises to the secreted. It localises to the cell wall. It carries out the reaction Hydrolysis of (1-&gt;3)-beta-D-glucosidic linkages in (1-&gt;3)-beta-D-glucans.. Its function is as follows. Glucanases play a role in cell expansion during growth, in cell-cell fusion during mating, and in spore release during sporulation. This enzyme may be involved in beta-glucan degradation and also function biosynthetically as a transglycosylase. The polypeptide is Probable glucan endo-1,3-beta-glucosidase eglC (eglC) (Aspergillus clavatus (strain ATCC 1007 / CBS 513.65 / DSM 816 / NCTC 3887 / NRRL 1 / QM 1276 / 107)).